The primary structure comprises 275 residues: Methylglyoxal reductase DkgA (275 aa).

Residue Tyr51 is the Proton donor of the active site. Position 107 (His107) interacts with substrate. 187–241 is a binding site for NADP(+); the sequence is SPLAQGGKGVFDQKVIRDLADKYGKTPAQIVIRWHLDSGLVVIPKSVTPSRIAEN.

Belongs to the aldo/keto reductase family. In terms of assembly, monomer.

It is found in the cytoplasm. The enzyme catalyses hydroxyacetone + NADP(+) = methylglyoxal + NADPH + H(+). It carries out the reaction a primary alcohol + NADP(+) = an aldehyde + NADPH + H(+). The catalysed reaction is 2-dehydro-L-idonate + NADP(+) = 2,5-didehydro-D-gluconate + NADPH + H(+). In terms of biological role, aldo-keto reductase that significantly contributes to cellular methylglyoxal detoxification by catalyzing the NADPH-dependent conversion of methylglyoxal to acetol. It also exhibits fairly high activity with glyoxal. Shows broad specificity and can use aromatic aldehydes such as 4-nitrobenzaldehyde, 3-nitrobenzaldehyde and benzaldehyde, and phenylglyoxal. Shows beta-keto ester reductase activity toward ethyl acetoacetate and a variety of 2-substituted derivatives. Also catalyzes the reduction of 2,5-diketo-D-gluconic acid (25DKG) to 2-keto-L-gulonic acid (2KLG) and could be involved in ketogluconate metabolism. However, the specific activity of the enzyme toward 2,5-diketo-D-gluconate was reported to be almost 400-fold lower than its activity toward methylglyoxal. Can catalyze in vitro the NADPH-dependent reduction of furfural, a natural product of lignocellulosic decomposition, to the less toxic product, furfuryl alcohol. However, it is unlikely that furfural is a physiological substrate. In Escherichia coli (strain K12), this protein is Methylglyoxal reductase DkgA.